The primary structure comprises 256 residues: 3-hydroxy-5-phosphonooxypentane-2,4-dione thiolase (256 aa).

Lys168 acts as the Schiff-base intermediate with substrate in catalysis.

This sequence belongs to the DeoC/FbaB aldolase family. Homodecamer.

The protein resides in the cytoplasm. The enzyme catalyses dihydroxyacetone phosphate + acetyl-CoA = 3-hydroxy-2,4-dioxopentyl phosphate + CoA. Involved in the degradation of phospho-AI-2, thereby terminating induction of the lsr operon and closing the AI-2 signaling cycle. Catalyzes the transfer of an acetyl moiety from 3-hydroxy-5-phosphonooxypentane-2,4-dione to CoA to form glycerone phosphate and acetyl-CoA. This is 3-hydroxy-5-phosphonooxypentane-2,4-dione thiolase (lsrF) from Shigella flexneri.